The following is a 354-amino-acid chain: Neutral protease 2 homolog AN7962 (354 aa).

An N-terminal signal peptide occupies residues 1–19; it reads MKFIAPIALLGMFQAASAS. Positions 20–178 are excised as a propeptide; it reads PVDIKTSNAG…GAQLSKLSKR (159 aa). Disulfide bonds link cysteine 184–cysteine 255 and cysteine 262–cysteine 280. Histidine 305 is a binding site for Zn(2+). The active site involves glutamate 306. Zn(2+) is bound by residues histidine 309 and aspartate 320.

It belongs to the peptidase M35 family. Zn(2+) serves as cofactor.

The protein localises to the secreted. The enzyme catalyses Preferential cleavage of bonds with hydrophobic residues in P1'. Also 3-Asn-|-Gln-4 and 8-Gly-|-Ser-9 bonds in insulin B chain.. Secreted metalloproteinase that allows assimilation of proteinaceous substrates. Shows high activities on basic nuclear substrates such as histone and protamine. This is Neutral protease 2 homolog AN7962 from Emericella nidulans (strain FGSC A4 / ATCC 38163 / CBS 112.46 / NRRL 194 / M139) (Aspergillus nidulans).